The chain runs to 555 residues: CTP synthase (555 aa).

The interval 1–270 is amidoligase domain; that stretch reads MTKFVFVTGG…DGLICDKLRL (270 aa). Serine 13 contributes to the CTP binding site. UTP is bound at residue serine 13. Residues 14-19 and aspartate 71 each bind ATP; that span reads SLGKGI. The Mg(2+) site is built by aspartate 71 and glutamate 144. CTP-binding positions include 151–153, 191–196, and lysine 227; these read DIE and KTKPTQ. Residues 191–196 and lysine 227 each bind UTP; that span reads KTKPTQ. The 253-residue stretch at 295-547 folds into the Glutamine amidotransferase type-1 domain; sequence NIVMVGKYVE…IKAALDHQAA (253 aa). An L-glutamine-binding site is contributed by glycine 356. The Nucleophile; for glutamine hydrolysis role is filled by cysteine 383. Residues 384–387, glutamate 407, and arginine 473 each bind L-glutamine; that span reads LGMQ. Residues histidine 520 and glutamate 522 contribute to the active site.

This sequence belongs to the CTP synthase family. Homotetramer.

The catalysed reaction is UTP + L-glutamine + ATP + H2O = CTP + L-glutamate + ADP + phosphate + 2 H(+). The enzyme catalyses L-glutamine + H2O = L-glutamate + NH4(+). It carries out the reaction UTP + NH4(+) + ATP = CTP + ADP + phosphate + 2 H(+). It functions in the pathway pyrimidine metabolism; CTP biosynthesis via de novo pathway; CTP from UDP: step 2/2. Allosterically activated by GTP, when glutamine is the substrate; GTP has no effect on the reaction when ammonia is the substrate. The allosteric effector GTP functions by stabilizing the protein conformation that binds the tetrahedral intermediate(s) formed during glutamine hydrolysis. Inhibited by the product CTP, via allosteric rather than competitive inhibition. Its function is as follows. Catalyzes the ATP-dependent amination of UTP to CTP with either L-glutamine or ammonia as the source of nitrogen. Regulates intracellular CTP levels through interactions with the four ribonucleotide triphosphates. This is CTP synthase from Albidiferax ferrireducens (strain ATCC BAA-621 / DSM 15236 / T118) (Rhodoferax ferrireducens).